The following is a 26-amino-acid chain: Conotoxin Eb6.17 (26 aa).

Disulfide bonds link cysteine 7–cysteine 18 and cysteine 13–cysteine 25.

This sequence belongs to the conotoxin O1 superfamily. In terms of tissue distribution, expressed by the venom duct.

Its subcellular location is the secreted. The protein is Conotoxin Eb6.17 (E1) of Conus ebraeus (Hebrew cone).